An 81-amino-acid chain; its full sequence is MMFPLARNALSSLKIQSILQSMARHSHVKHSPDFHDKYGNAVLASGTAFCVATWVFTATQIGIEWNLSPVGRVTPKEWKHQ.

A mitochondrion-targeting transit peptide spans 1–25 (MMFPLARNALSSLKIQSILQSMARH). The Mitochondrial matrix segment spans residues 26 to 33 (SHVKHSPD). The helical transmembrane segment at 34-60 (FHDKYGNAVLASGTAFCVATWVFTATQ) threads the bilayer. Residues 61–81 (IGIEWNLSPVGRVTPKEWKHQ) are Mitochondrial intermembrane-facing.

This sequence belongs to the cytochrome c oxidase VIIb family. Component of the cytochrome c oxidase (complex IV, CIV), a multisubunit enzyme composed of 14 subunits. The complex is composed of a catalytic core of 3 subunits MT-CO1, MT-CO2 and MT-CO3, encoded in the mitochondrial DNA, and 11 supernumerary subunits COX4I, COX5A, COX5B, COX6A, COX6B, COX6C, COX7A, COX7B, COX7C, COX8 and NDUFA4, which are encoded in the nuclear genome. The complex exists as a monomer or a dimer and forms supercomplexes (SCs) in the inner mitochondrial membrane with NADH-ubiquinone oxidoreductase (complex I, CI) and ubiquinol-cytochrome c oxidoreductase (cytochrome b-c1 complex, complex III, CIII), resulting in different assemblies (supercomplex SCI(1)III(2)IV(1) and megacomplex MCI(2)III(2)IV(2)).

It is found in the mitochondrion inner membrane. It participates in energy metabolism; oxidative phosphorylation. Its function is as follows. Component of the cytochrome c oxidase, the last enzyme in the mitochondrial electron transport chain which drives oxidative phosphorylation. The respiratory chain contains 3 multisubunit complexes succinate dehydrogenase (complex II, CII), ubiquinol-cytochrome c oxidoreductase (cytochrome b-c1 complex, complex III, CIII) and cytochrome c oxidase (complex IV, CIV), that cooperate to transfer electrons derived from NADH and succinate to molecular oxygen, creating an electrochemical gradient over the inner membrane that drives transmembrane transport and the ATP synthase. Cytochrome c oxidase is the component of the respiratory chain that catalyzes the reduction of oxygen to water. Electrons originating from reduced cytochrome c in the intermembrane space (IMS) are transferred via the dinuclear copper A center (CU(A)) of subunit 2 and heme A of subunit 1 to the active site in subunit 1, a binuclear center (BNC) formed by heme A3 and copper B (CU(B)). The BNC reduces molecular oxygen to 2 water molecules using 4 electrons from cytochrome c in the IMS and 4 protons from the mitochondrial matrix. The protein is Cytochrome c oxidase subunit 7B2, mitochondrial (COX7B2) of Homo sapiens (Human).